The sequence spans 389 residues: Dirigent protein 25 (389 aa).

Positions 1–21 (MAGCKVLFFLILALAITFVSA) are cleaved as a signal peptide. Composition is skewed to low complexity over residues 50 to 68 (GPFP…SGTG), 77 to 86 (LGTNTGPGPL), and 98 to 135 (SSGT…PLPT). Positions 50–135 (GPFPTANSGP…PGSGSGPLPT (86 aa)) are disordered.

It belongs to the plant dirigent protein family. As to quaternary structure, homodimer.

It is found in the secreted. The protein resides in the extracellular space. The protein localises to the apoplast. Functionally, dirigent proteins impart stereoselectivity on the phenoxy radical-coupling reaction, yielding optically active lignans from two molecules of coniferyl alcohol in the biosynthesis of lignans, flavonolignans, and alkaloids and thus plays a central role in plant secondary metabolism. The sequence is that of Dirigent protein 25 (DIR25) from Arabidopsis thaliana (Mouse-ear cress).